The primary structure comprises 257 residues: Insulin-induced gene 1 protein (257 aa).

At 1-64 the chain is on the cytoplasmic side; sequence MPRLHDHVWS…ARPGSWHHDL (64 aa). Residues 32–54 are disordered; it reads CPQGSGAPEPAPRSPRAGTAGCG. A helical transmembrane segment spans residues 65–87; it reads VQRSLVLFSFGVVLALVLNLLQI. Over 88 to 106 the chain is Extracellular; the sequence is QRNVTLFPDEVIATIFSSA. A helical membrane pass occupies residues 107 to 124; sequence WWVPPCCGTAAAVVGLLY. Topologically, residues 125-139 are cytoplasmic; the sequence is PCIDSHLGEPHKFKR. Residues Lys136 and Lys138 each participate in a glycyl lysine isopeptide (Lys-Gly) (interchain with G-Cter in ubiquitin) cross-link. Residues 140–162 traverse the membrane as a helical segment; the sequence is EWASVMRCIAVFVGINHASAKLD. The Extracellular segment spans residues 163–165; the sequence is FAN. Residues 166-184 form a helical membrane-spanning segment; sequence NVQLSLTLAALSLGLWWTF. The Cytoplasmic segment spans residues 185 to 189; sequence DRSRS. The residue at position 187 (Ser187) is a Phosphoserine. The chain crosses the membrane as a helical span at residues 190–211; the sequence is GLGLGITIAFLATLITQFLVYN. Over 212 to 225 the chain is Extracellular; the sequence is GVYQYTSPDFLYIR. A helical transmembrane segment spans residues 226–243; the sequence is SWLPCIFFSGGVTVGNIG. At 244–257 the chain is on the cytoplasmic side; that stretch reads RQLAMGVPEKPHSD. Positions 251–257 match the KxHxx motif; sequence PEKPHSD.

It belongs to the INSIG family. Interacts with SCAP; interaction is direct and only takes place in the presence of sterols; it prevents interaction between SCAP and the coat protein complex II (COPII). Associates with the SCAP-SREBP complex (composed of SCAP and SREBF1/SREBP1 or SREBF2/SREBP2); association is mediated via its interaction with SCAP and only takes place in the presence of sterols. Interaction with SCAP is mutually exclusive with PAQR3. Interacts with HMGCR (via its SSD); the interaction, accelerated by sterols, leads to the recruitment of HMGCR to AMFR/gp78 for its ubiquitination by the sterol-mediated ERAD pathway. Interacts with AMFR/gp78 (via its membrane domain); the interaction recruits HMCR at the ER membrane for its ubiquitination and degradation by the sterol-mediated ERAD pathway. Interacts with SOAT2/ACAT2; leading to promote recruitment of AMFR/gp78 and subsequent ubiquitination of SOAT2/ACAT2. Interacts with RNF139. Interacts with RNF145. In terms of processing, phosphorylation at Ser-187 by PCK1 reduces binding to oxysterol, disrupting the interaction between INSIG1 and SCAP, thereby promoting nuclear translocation of SREBP proteins (SREBF1/SREBP1 or SREBF2/SREBP2) and subsequent transcription of downstream lipogenesis-related genes. Ubiquitinated by AMFR/gp78 in response to sterol deprivation, leading to its degradation: when the SCAP-SREBP complex becomes dissociated from INSIG1, INSIG1 is then ubiquitinated and degraded in proteasomes. Although ubiquitination is required for rapid INSIG1 degradation, it is not required for release of the SCAP-SREBP complex. Ubiquitinated by RNF139.

The protein resides in the endoplasmic reticulum membrane. In terms of biological role, oxysterol-binding protein that mediates feedback control of cholesterol synthesis by controlling both endoplasmic reticulum to Golgi transport of SCAP and degradation of HMGCR. Acts as a negative regulator of cholesterol biosynthesis by mediating the retention of the SCAP-SREBP complex in the endoplasmic reticulum, thereby blocking the processing of sterol regulatory element-binding proteins (SREBPs) SREBF1/SREBP1 and SREBF2/SREBP2. Binds oxysterol, including 25-hydroxycholesterol, regulating interaction with SCAP and retention of the SCAP-SREBP complex in the endoplasmic reticulum. In presence of oxysterol, interacts with SCAP, retaining the SCAP-SREBP complex in the endoplasmic reticulum, thereby preventing SCAP from escorting SREBF1/SREBP1 and SREBF2/SREBP2 to the Golgi. Sterol deprivation or phosphorylation by PCK1 reduce oxysterol-binding, disrupting the interaction between INSIG1 and SCAP, thereby promoting Golgi transport of the SCAP-SREBP complex, followed by processing and nuclear translocation of SREBF1/SREBP1 and SREBF2/SREBP2. Also regulates cholesterol synthesis by regulating degradation of HMGCR: initiates the sterol-mediated ubiquitin-mediated endoplasmic reticulum-associated degradation (ERAD) of HMGCR via recruitment of the reductase to the ubiquitin ligases AMFR/gp78 and/or RNF139. Also regulates degradation of SOAT2/ACAT2 when the lipid levels are low: initiates the ubiquitin-mediated degradation of SOAT2/ACAT2 via recruitment of the ubiquitin ligases AMFR/gp78. This chain is Insulin-induced gene 1 protein, found in Cricetulus griseus (Chinese hamster).